Reading from the N-terminus, the 686-residue chain is X-linked interleukin-1 receptor accessory protein-like 2 (686 aa).

The signal sequence occupies residues 1–16; it reads MKLPLLLALVVCSAVS. Over 17-354 the chain is Extracellular; the sequence is TNLKMVSKRN…LLRKKDLIYK (338 aa). Residues 32–132 enclose the Ig-like C2-type 1 domain; that stretch reads IDWSVDLKTY…YCMKVSMSLT (101 aa). A disulfide bridge connects residues C53 and C116. N-linked (GlcNAc...) asparagine glycosylation is found at N63, N120, N136, N211, and N328. 2 consecutive Ig-like C2-type domains span residues 141-232 and 239-347; these read CYNS…LKVT and PPKP…VLLR. Cystine bridges form between C162/C214 and C265/C331. The chain crosses the membrane as a helical span at residues 355 to 375; it reads IELAGGLGAIFLLLILLLVVY. At 376 to 686 the chain is on the cytoplasmic side; the sequence is KCYNIELMLF…KELSFTSDIW (311 aa). Residues 400–556 enclose the TIR domain; it reads KEYDAYLSYT…KFWKHLVYEM (157 aa). The active site involves E488.

Belongs to the interleukin-1 receptor family. In terms of tissue distribution, detected in fetal brain after day 12.5, in particular in parts of the diencephalon and in the basal plate of the spinal cord. In postnatal brain detected in cerebral cortex, olfactory bulb, in the CA1 region of the hippocampus and in Purkinje cells of the Xth cerebellar lobule.

Its subcellular location is the membrane. It catalyses the reaction NAD(+) + H2O = ADP-D-ribose + nicotinamide + H(+). This is X-linked interleukin-1 receptor accessory protein-like 2 (Il1rapl2) from Mus musculus (Mouse).